The primary structure comprises 112 residues: Large ribosomal subunit protein bL17 (112 aa).

Belongs to the bacterial ribosomal protein bL17 family. As to quaternary structure, part of the 50S ribosomal subunit. Contacts protein L32.

The protein is Large ribosomal subunit protein bL17 of Carboxydothermus hydrogenoformans (strain ATCC BAA-161 / DSM 6008 / Z-2901).